A 144-amino-acid chain; its full sequence is TSC22 domain family protein 1 (144 aa).

The leucine-zipper stretch occupies residues 77–98; that stretch reads LKEQIKELIEKNSQLEQENNLL. The tract at residues 109–144 is disordered; that stretch reads QFQAQLQTGSPPATTQPQGTTQPPAQPASQGSGPTA. Residues 115–144 show a composition bias toward low complexity; the sequence is QTGSPPATTQPQGTTQPPAQPASQGSGPTA.

It belongs to the TSC-22/Dip/Bun family. Forms homodimers. Forms a heterodimer with TSC22D4/THG1. Interacts with histone H1-2. Interacts with GNL3.

Its subcellular location is the cytoplasm. It localises to the nucleus. In terms of biological role, transcriptional repressor. Plays a role in the repression of hematopoietic precursor cell growth. Promotes IL2 deprivation-induced apoptosis in T-lymphocytes, via repression of TSC22D3/GILZ transcription and activation of the caspase cascade. Positively regulates cell death in response to TGFB3 during mammary gland involution. This Bos taurus (Bovine) protein is TSC22 domain family protein 1.